A 213-amino-acid chain; its full sequence is Ras-related protein Rab-2 (213 aa).

14 residues coordinate GTP: Thr-15, Gly-16, Gly-18, Lys-19, Ser-20, Cys-21, Gln-32, Pro-33, His-35, Thr-38, Gly-64, Asn-119, Asp-122, and Ala-150. Ser-20 is a Mg(2+) binding site. Thr-38 is a binding site for Mg(2+). Residues 190–213 form a disordered region; the sequence is QHSPTNPSLPGAGGAAGAANSGCC. Residues Cys-212 and Cys-213 are each lipidated (S-geranylgeranyl cysteine).

This sequence belongs to the small GTPase superfamily. Rab family. In terms of assembly, interacts (GTP-bound form) with Vps16A and Vps39; the interaction with Vps39 is probably direct.

It localises to the vesicle. The protein resides in the cytoplasmic vesicle. It is found in the cell projection. Its subcellular location is the axon. The protein localises to the presynapse. It localises to the presynaptic active zone. The protein resides in the golgi apparatus. It is found in the trans-Golgi network. Its subcellular location is the perikaryon. The protein localises to the autophagosome membrane. It localises to the autolysosome membrane. The catalysed reaction is GTP + H2O = GDP + phosphate + H(+). May be involved in bidirectional endoplasmic reticulum (ER) to Golgi trafficking. Together with Rab7 involved in promoting fusion of autophagosomes and endosomes with lysosomes, probably through recruitment of the HOPS tethering complex. Involved in biosynthetic transport to lysosomes. In larval motor neurons, mediates the biogenesis of presynaptic cargo vesicles and their long-range axonal trafficking to synaptic termini. Not involved in axonal trafficking of mitochondria. During vesicle biogenesis, active zone proteins (including brp/Bruchpilot) and synaptic vesicle proteins (including VGlut) are sorted from the trans-Golgi in a Rab2-dependent manner via, at least, two independent routes. Acts upstream of Arl8 during presynaptic precursor vesicle biogenesis. Associated with lysosomal marker positive presynaptic cargo vesicles during anterograde and retrograde axonal trafficking, probably while in its GTP-bound active state. Involved in the delivery of presynaptic cargos, but not presynapse assembly or active zone function at synaptic termini. Required for autophagocytosis-dependent remodeling of myofibrils and transverse-tubules (T-tubules) during metamorphosis. The chain is Ras-related protein Rab-2 from Drosophila melanogaster (Fruit fly).